A 122-amino-acid chain; its full sequence is Large ribosomal subunit protein uL22 (122 aa).

Belongs to the universal ribosomal protein uL22 family. In terms of assembly, part of the 50S ribosomal subunit.

This protein binds specifically to 23S rRNA; its binding is stimulated by other ribosomal proteins, e.g. L4, L17, and L20. It is important during the early stages of 50S assembly. It makes multiple contacts with different domains of the 23S rRNA in the assembled 50S subunit and ribosome. In terms of biological role, the globular domain of the protein is located near the polypeptide exit tunnel on the outside of the subunit, while an extended beta-hairpin is found that lines the wall of the exit tunnel in the center of the 70S ribosome. This Prochlorococcus marinus (strain MIT 9303) protein is Large ribosomal subunit protein uL22.